Reading from the N-terminus, the 974-residue chain is MNQFDSALHQGTPGVSVLDNRGHVIRELRYYRHPDTPQEIAERIAFHQYDSYGFISQSIDPRLAERRKQDSSVKPNLSYFTALSGEVLRTDGVDAGTIFSLNDIAARPAISISATGVSHTWQYEGENRPGRVLSRSEREKDREERIIERFYWAGSDASQKANNLAGQCLRHYNSAGLNQTLSIALTGTPISACFQPLLESAEPEWQGTNESAWLELLTPEIFTTYNRADANGETLVQTDAMGNIQRLAYDVAGFLKSSWLSLKGGQEQIIVKSLTYSAAGQKLQEEHGNGVLTTYSYEAETQRLIGIRTERPAGHLSGARVFQDLRYTYDPVGNVLRITNDAEATRFWRNQKVVPENTYIYDTLYQLVSANGREMANIPQQSSQLPTLSPIDNNAYTNYIRNYHYDSAGNLMQIRHTSAAANNSYTTNITVSKYSNRAVLSSLTDDVDKVEAFFDAAGRQNQLLPGQTLSWNARGELAKVTPVARDGQESDSETYRYDANSQRVSKMAIQQSNNNTQTRRVLYLAGLERRTIHQGNTLFETLLVVKIGEAGRAQVQAMHWELGQPTEVANDELRYSYDNLIGSSGLEVDGTGQLISQEEYYPYGGTAVWMARSQREASDKAYGYSGKERDATGLYYYGFRYYQPWAGRWLSADPAGTIDGLNLFRMVRNNPIVLHDPDGLAPGFFERISSFRKKDTLTISSLKGTGPFYTRSESEIDIDFLFSRQDRDKDFPPQNHKELSAEDRREVLEVSSGENITSANKSSKWYAGTHWETKPLKNNTDLVVLHNGVQGAAGININLNDIKPGRSVLVTAGTLTGCTMITGVKGNNFYALHAGTGTPSENWVTGEHGVTDNFRMLNKLIPDAGIDLNPEAVNDSLLTILDYFDNGTIAYNGKKGSEIHRDADNILNYRTTGYENTVGVSFSLLTKDKNGEVSASTLLELGELKPHKKHRTRGQFGMTELKYEARKNTVVKLR.

RHS repeat units follow at residues 165–179 (AGQC…GLNQ), 290–304 (GVLT…TQRL), 322–336 (FQDL…GNVL), 354–368 (VPEN…YQLV), 398–412 (NYIR…GNLM), 490–504 (SDSE…SQRV), 570–584 (NDEL…IGSS), 596–610 (SQEE…AVWM), and 630–644 (DATG…YYQP). The interval 600 to 680 (YYPYGGTAVW…PIVLHDPDGL (81 aa)) is RHS-repeat associated core domain. Positions 699–940 (ISSLKGTGPF…GEVSASTLLE (242 aa)) are cytotoxic necrotising factor domain.

This sequence belongs to the RHS family. In terms of assembly, semipurified toxin complex consists of at least YenA1-YenA2-YenB-YenC1-YenC2-Chi1-Chi2. The Yen-TC:K9 subcomplex is about 26 nm tall and 22 nm in diameter with 5-fold symmetry and 5 copies of YenA1, YenA2, Chi1 and Chi2; the chitinase subunits may be solvent accessible on the exterior the complex. The Yen-TC:K9 subcomplex has no insecticidal activity. The native complex with additional YenB, YenC1 and YenC2 subunits is 16 nm taller and is insecticidal; the toxicity-conferring subunits are present at about 1 copy each.

The protein resides in the secreted. With respect to regulation, toxin complex is secreted when grown at 25 degrees Celsius or less; at higher temperatures the proteins are present intracellularly but not secreted. Functionally, part of an orally active toxin complex (TC) with strong insecticidal effects on larvae of the Coleoptera Costelytra zealandica, Acrossidius tasmania and Adoryphorus couloni and some Lepidoptera larvae. The TC has an endochitinase activity. This is Toxin subunit YenC1 from Yersinia entomophaga.